Here is a 339-residue protein sequence, read N- to C-terminus: Dual specificity protein phosphatase 12 (339 aa).

An N-acetylmethionine modification is found at methionine 1. Polar residues predominate over residues methionine 1–serine 22. The tract at residues methionine 1 to glycine 25 is disordered. In terms of domain architecture, Tyrosine-protein phosphatase spans histidine 26–glutamate 170. Cysteine 114 (phosphocysteine intermediate) is an active-site residue. Position 115–120 (histidine 115–arginine 120) interacts with substrate. At serine 334 the chain carries Phosphoserine.

This sequence belongs to the protein-tyrosine phosphatase family. Non-receptor class dual specificity subfamily. As to quaternary structure, monomer. Zn(2+) is required as a cofactor.

It localises to the nucleus. The protein resides in the cytoplasm. Its subcellular location is the cytosol. It catalyses the reaction O-phospho-L-tyrosyl-[protein] + H2O = L-tyrosyl-[protein] + phosphate. The enzyme catalyses O-phospho-L-seryl-[protein] + H2O = L-seryl-[protein] + phosphate. The catalysed reaction is O-phospho-L-threonyl-[protein] + H2O = L-threonyl-[protein] + phosphate. In terms of biological role, dual specificity phosphatase; can dephosphorylate both phosphotyrosine and phosphoserine or phosphothreonine residues. Can dephosphorylate glucokinase (in vitro). Has phosphatase activity with the synthetic substrate 6,8-difluoro-4-methylumbelliferyl phosphate and other in vitro substrates. The protein is Dual specificity protein phosphatase 12 (Dusp12) of Rattus norvegicus (Rat).